The sequence spans 312 residues: Ribosomal RNA small subunit methyltransferase H (312 aa).

S-adenosyl-L-methionine contacts are provided by residues 33-35, D51, F78, D97, and Q104; that span reads GGY.

This sequence belongs to the methyltransferase superfamily. RsmH family.

The protein localises to the cytoplasm. The catalysed reaction is cytidine(1402) in 16S rRNA + S-adenosyl-L-methionine = N(4)-methylcytidine(1402) in 16S rRNA + S-adenosyl-L-homocysteine + H(+). Its function is as follows. Specifically methylates the N4 position of cytidine in position 1402 (C1402) of 16S rRNA. This is Ribosomal RNA small subunit methyltransferase H from Orientia tsutsugamushi (strain Ikeda) (Rickettsia tsutsugamushi).